We begin with the raw amino-acid sequence, 526 residues long: Peptide chain release factor 3 (526 aa).

Residues 9 to 277 form the tr-type G domain; it reads NKRRTFAIIS…DFVEYAPGPQ (269 aa). Residues 18–25, 86–90, and 140–143 each bind GTP; these read SHPDAGKT, DTPGH, and NKLD.

The protein belongs to the TRAFAC class translation factor GTPase superfamily. Classic translation factor GTPase family. PrfC subfamily.

The protein resides in the cytoplasm. In terms of biological role, increases the formation of ribosomal termination complexes and stimulates activities of RF-1 and RF-2. It binds guanine nucleotides and has strong preference for UGA stop codons. It may interact directly with the ribosome. The stimulation of RF-1 and RF-2 is significantly reduced by GTP and GDP, but not by GMP. The protein is Peptide chain release factor 3 of Legionella pneumophila (strain Paris).